We begin with the raw amino-acid sequence, 823 residues long: Lon protease (823 aa).

A Lon N-terminal domain is found at 22–217 (LPLLPVRDVV…KVNEHLNKEH (196 aa)). Position 369–376 (369–376 (GPPGVGKT)) interacts with ATP. The Lon proteolytic domain maps to 605–786 (KNEVGIVTGL…DDVLAVALET (182 aa)). Residues serine 692 and lysine 735 contribute to the active site. The segment at 788 to 823 (PPPPPASEGKPAATVKAPPRRGIAAPRKGAMAGAKS) is disordered.

Belongs to the peptidase S16 family. In terms of assembly, homohexamer. Organized in a ring with a central cavity.

The protein resides in the cytoplasm. The enzyme catalyses Hydrolysis of proteins in presence of ATP.. Functionally, ATP-dependent serine protease that mediates the selective degradation of mutant and abnormal proteins as well as certain short-lived regulatory proteins. Required for cellular homeostasis and for survival from DNA damage and developmental changes induced by stress. Degrades polypeptides processively to yield small peptide fragments that are 5 to 10 amino acids long. Binds to DNA in a double-stranded, site-specific manner. This chain is Lon protease, found in Geobacter metallireducens (strain ATCC 53774 / DSM 7210 / GS-15).